Here is a 366-residue protein sequence, read N- to C-terminus: Galactoside alpha-(1,2)-fucosyltransferase 1 (366 aa).

At 1-8 the chain is on the cytoplasmic side; it reads MWPRSHRH. Residues 9 to 25 traverse the membrane as a helical; Signal-anchor for type II membrane protein segment; sequence LCLAFLLVCVLSAISFL. Topologically, residues 26–366 are lumenal; it reads IHFHQDSIRH…LSPLWPLAEP (341 aa). Residues N66, N302, and N328 are each glycosylated (N-linked (GlcNAc...) asparagine).

The protein belongs to the glycosyltransferase 11 family.

It localises to the golgi apparatus. The protein localises to the golgi stack membrane. The catalysed reaction is a beta-D-galactosyl-(1-&gt;4)-N-acetyl-beta-D-glucosaminyl derivative + GDP-beta-L-fucose = an alpha-L-Fuc-(1-&gt;2)-beta-D-Gal-(1-&gt;4)-beta-D-GlcNAc derivative + GDP + H(+). The enzyme catalyses a ganglioside GA1 + GDP-beta-L-fucose = a ganglioside Fuc-GA1 + GDP + H(+). It catalyses the reaction a beta-D-Gal-(1-&gt;3)-beta-D-GlcNAc-(1-&gt;3)-beta-D-Gal-(1-&gt;4)-beta-D-Glc-(1&lt;-&gt;1')-Cer(d18:1(4E)) + GDP-beta-L-fucose = alpha-L-fucosyl-(1-&gt;2)- beta-D-galactosyl-(1-&gt;3)-N-acetyl-beta-D-glucosaminyl-(1-&gt;3)-beta-D-galactosyl-(1-&gt;4)-beta-D-glucosyl-(1&lt;-&gt;1')-N-acylsphing-4-enine + GDP + H(+). It carries out the reaction a neolactoside nLc4Cer(d18:1(4E)) + GDP-beta-L-fucose = a neolactoside IV(2)-alpha-Fuc-nLc4Cer(d18:1(4E)) + GDP + H(+). The catalysed reaction is a ganglioside GM1 + GDP-beta-L-fucose = a ganglioside Fuc-GM1 + GDP + H(+). The enzyme catalyses beta-D-galactosyl-(1-&gt;3)-N-acetyl-D-galactosamine + GDP-beta-L-fucose = alpha-L-fucosyl-(1-&gt;2)-beta-D-galactosyl-(1-&gt;3)-N-acetyl-D-galactosamine + GDP + H(+). Its pathway is protein modification; protein glycosylation. In terms of biological role, catalyzes the transfer of L-fucose, from a guanosine diphosphate-beta-L-fucose, to the terminal galactose residue of glycoconjugates through an alpha(1,2) linkage leading to H antigen synthesis that is an intermediate substrate in the synthesis of ABO blood group antigens. H antigen is essential for maturation of the glomerular layer of the main olfactory bulb, in cell migration and early cell-cell contacts during tumor associated angiogenesis. Preferentially fucosylates soluble lactose and to a lesser extent fucosylates glycolipids gangliosides GA1 and GM1a. This is Galactoside alpha-(1,2)-fucosyltransferase 1 from Saimiri boliviensis boliviensis (Bolivian squirrel monkey).